Reading from the N-terminus, the 763-residue chain is Amine oxidase [copper-containing] 3 (763 aa).

Over 1–6 (MNQKTT) the chain is Cytoplasmic. Residues 7–27 (LVLLALAVITIFALVCVLIAG) form a helical; Signal-anchor for type II membrane protein membrane-spanning segment. Residues 28–763 (RGGDGGEASQ…AFSHGGFFTN (736 aa)) lie on the Extracellular side of the membrane. An N-linked (GlcNAc...) asparagine glycan is attached at asparagine 137. Cysteines 198 and 199 form a disulfide. N-linked (GlcNAc...) asparagine glycosylation is found at asparagine 232 and asparagine 294. The active-site Proton acceptor is aspartate 386. A disulfide bond links cysteine 404 and cysteine 430. The Schiff-base intermediate with substrate; via topaquinone role is filled by tyrosine 471. Residue tyrosine 471 is modified to 2',4',5'-topaquinone. Positions 520 and 522 each coordinate Cu(2+). Aspartate 529, leucine 530, aspartate 531, and glutamate 572 together coordinate Ca(2+). An N-linked (GlcNAc...) asparagine glycan is attached at asparagine 618. Ca(2+) contacts are provided by glutamate 641, phenylalanine 663, and asparagine 665. Asparagine 666 carries an N-linked (GlcNAc...) asparagine glycan. Residues glutamate 667, aspartate 673, and leucine 674 each coordinate Ca(2+). A Cu(2+)-binding site is contributed by histidine 684. Cysteine 734 and cysteine 741 form a disulfide bridge.

This sequence belongs to the copper/topaquinone oxidase family. In terms of assembly, homodimer; disulfide-linked. Probably forms heterodimers with AOC2. The cofactor is Cu(2+). It depends on Ca(2+) as a cofactor. L-topaquinone is required as a cofactor. Post-translationally, topaquinone (TPQ) is generated by copper-dependent autoxidation of a specific tyrosyl residue. In terms of processing, N- and O-glycosylated.

It localises to the cell membrane. The catalysed reaction is methylamine + O2 + H2O = formaldehyde + H2O2 + NH4(+). It catalyses the reaction benzylamine + O2 + H2O = benzaldehyde + H2O2 + NH4(+). It carries out the reaction 2-phenylethylamine + O2 + H2O = 2-phenylacetaldehyde + H2O2 + NH4(+). In terms of biological role, catalyzes the oxidative deamination of primary amines to the corresponding aldehydes with the concomitant production of hydrogen peroxide and ammonia. Has a preference for the primary monoamines methylamine and benzylamine. Could also act on 2-phenylethylamine but much less efficiently. At endothelial cells surface can also function as a cell adhesion protein that participates in lymphocyte extravasation and recirculation by mediating the binding of lymphocytes to peripheral lymph node vascular endothelial cells in an L-selectin-independent fashion. This is Amine oxidase [copper-containing] 3 from Bos taurus (Bovine).